The following is a 229-amino-acid chain: Potassium/proton antiporter CemA (229 aa).

The next 4 helical transmembrane spans lie at 7-27, 114-134, 154-174, and 189-209; these read FTPL…SLSF, IICF…LVIL, ILLV…ELMI, and IISG…KYWI.

It belongs to the CemA family.

The protein localises to the plastid. Its subcellular location is the chloroplast inner membrane. It catalyses the reaction K(+)(in) + H(+)(out) = K(+)(out) + H(+)(in). Its function is as follows. Contributes to K(+)/H(+) antiport activity by supporting proton efflux to control proton extrusion and homeostasis in chloroplasts in a light-dependent manner to modulate photosynthesis. Prevents excessive induction of non-photochemical quenching (NPQ) under continuous-light conditions. Indirectly promotes efficient inorganic carbon uptake into chloroplasts. The chain is Potassium/proton antiporter CemA from Acorus calamus var. americanus (American sweet flag).